Here is a 246-residue protein sequence, read N- to C-terminus: Deoxycytidylate 5-hydroxymethyltransferase (246 aa).

Residue Cys148 is part of the active site.

Belongs to the thymidylate synthase family.

It carries out the reaction dCMP + (6R)-5,10-methylene-5,6,7,8-tetrahydrofolate + H2O = 5-hydroxymethyl-dCMP + (6S)-5,6,7,8-tetrahydrofolate. The chain is Deoxycytidylate 5-hydroxymethyltransferase (42) from Escherichia coli (Bacteriophage T2).